The primary structure comprises 314 residues: Homoserine O-succinyltransferase (314 aa).

Cys-142 acts as the Acyl-thioester intermediate in catalysis. 2 residues coordinate substrate: Lys-163 and Ser-192. The Proton acceptor role is filled by His-235. Glu-237 is an active-site residue. A substrate-binding site is contributed by Arg-249.

This sequence belongs to the MetA family.

The protein localises to the cytoplasm. It carries out the reaction L-homoserine + succinyl-CoA = O-succinyl-L-homoserine + CoA. It participates in amino-acid biosynthesis; L-methionine biosynthesis via de novo pathway; O-succinyl-L-homoserine from L-homoserine: step 1/1. In terms of biological role, transfers a succinyl group from succinyl-CoA to L-homoserine, forming succinyl-L-homoserine. The sequence is that of Homoserine O-succinyltransferase from Aeromonas salmonicida (strain A449).